Consider the following 168-residue polypeptide: Fusion protein P6 (168 aa).

4 helical membrane-spanning segments follow: residues 29-49 (IWPL…AGFF), 52-72 (AGFT…TPTL), 94-114 (FQSL…ALIA), and 143-163 (ALPG…LWPS).

In terms of assembly, interacts with P3.

It is found in the virion membrane. Mediates the fusion with the host outer membrane during virus entry into the host cell. This Pseudomonas savastanoi pv. phaseolicola (Pseudomonas syringae pv. phaseolicola) protein is Fusion protein P6 (P6).